Reading from the N-terminus, the 586-residue chain is Phosphomethylpyrimidine synthase (586 aa).

The interval 1-58 (MKQSVSAEQIELKSSLPGSKKVYVDGPREGMKVPMREIEQSDTNGVPNPPIRVYDTSG) is disordered. Over residues 22–39 (VYVDGPREGMKVPMREIE) the composition is skewed to basic and acidic residues. Substrate-binding positions include Asn193, Met222, Tyr251, His287, 307–309 (SRG), 348–351 (DGLR), and Glu387. His391 contributes to the Zn(2+) binding site. Substrate is bound at residue Tyr414. Residue His455 participates in Zn(2+) binding. [4Fe-4S] cluster contacts are provided by Cys535, Cys538, and Cys543.

It belongs to the ThiC family. [4Fe-4S] cluster is required as a cofactor.

It carries out the reaction 5-amino-1-(5-phospho-beta-D-ribosyl)imidazole + S-adenosyl-L-methionine = 4-amino-2-methyl-5-(phosphooxymethyl)pyrimidine + CO + 5'-deoxyadenosine + formate + L-methionine + 3 H(+). The protein operates within cofactor biosynthesis; thiamine diphosphate biosynthesis. In terms of biological role, catalyzes the synthesis of the hydroxymethylpyrimidine phosphate (HMP-P) moiety of thiamine from aminoimidazole ribotide (AIR) in a radical S-adenosyl-L-methionine (SAM)-dependent reaction. The protein is Phosphomethylpyrimidine synthase of Bacillus thuringiensis (strain Al Hakam).